Consider the following 618-residue polypeptide: DNA mismatch repair protein MutL (618 aa).

Polar residues predominate over residues 348–359; it reads QTDTARSPTGNF. Positions 348 to 400 are disordered; sequence QTDTARSPTGNFESGEVFDYPKSQLQPSHSVSSGGASLGSRSAGGSGGAYRAT. Low complexity predominate over residues 377 to 388; the sequence is SVSSGGASLGSR.

It belongs to the DNA mismatch repair MutL/HexB family.

Functionally, this protein is involved in the repair of mismatches in DNA. It is required for dam-dependent methyl-directed DNA mismatch repair. May act as a 'molecular matchmaker', a protein that promotes the formation of a stable complex between two or more DNA-binding proteins in an ATP-dependent manner without itself being part of a final effector complex. This is DNA mismatch repair protein MutL from Pseudoalteromonas translucida (strain TAC 125).